Reading from the N-terminus, the 487-residue chain is NADH-quinone oxidoreductase subunit N (487 aa).

A run of 14 helical transmembrane segments spans residues 16 to 36, 45 to 65, 79 to 99, 111 to 131, 133 to 153, 168 to 188, 212 to 232, 257 to 276, 281 to 298, 306 to 326, 333 to 353, 378 to 398, 413 to 435, and 457 to 477; these read VIMPEVILSVLGMALLLVNVF, LAWLSLIGIVGAGFAAVTGWG, NFAIFFKIIFLLAAGLAVLIS, GELYPIILFTTVGMMLMAAAT, LMTIFLGLELMSISLYVLAGF, FLLGAFSTGFLLYGMALIYGV, LLIGMFLMLTGFLFKIAAAPF, AAGFAAMLRLLLVAFPAMIA, LLWILAVLTMTVGNFTAL, MLAYSSIAHAGYCLVGFASGT, ILFYMLSYTFMNIGAFAVIVL, ALAMTVFMFSLAGMPPTAGFI, IWLAIIGVLNSAASVYYYLRVIV, and LALVVSAAGSLIPGIIPSMIL.

This sequence belongs to the complex I subunit 2 family. As to quaternary structure, NDH-1 is composed of 14 different subunits. Subunits NuoA, H, J, K, L, M, N constitute the membrane sector of the complex.

The protein resides in the cell inner membrane. The catalysed reaction is a quinone + NADH + 5 H(+)(in) = a quinol + NAD(+) + 4 H(+)(out). NDH-1 shuttles electrons from NADH, via FMN and iron-sulfur (Fe-S) centers, to quinones in the respiratory chain. The immediate electron acceptor for the enzyme in this species is believed to be ubiquinone. Couples the redox reaction to proton translocation (for every two electrons transferred, four hydrogen ions are translocated across the cytoplasmic membrane), and thus conserves the redox energy in a proton gradient. The protein is NADH-quinone oxidoreductase subunit N of Trichlorobacter lovleyi (strain ATCC BAA-1151 / DSM 17278 / SZ) (Geobacter lovleyi).